Consider the following 246-residue polypeptide: Probable transcriptional regulatory protein CTC_02215 (246 aa).

The protein belongs to the TACO1 family.

It localises to the cytoplasm. The sequence is that of Probable transcriptional regulatory protein CTC_02215 from Clostridium tetani (strain Massachusetts / E88).